Here is a 302-residue protein sequence, read N- to C-terminus: Putative gluconeogenesis factor (302 aa).

It belongs to the gluconeogenesis factor family.

It is found in the cytoplasm. Its function is as follows. Required for morphogenesis under gluconeogenic growth conditions. In Escherichia coli O157:H7, this protein is Putative gluconeogenesis factor (ybhK).